Reading from the N-terminus, the 156-residue chain is Arginine repressor (156 aa).

This sequence belongs to the ArgR family.

It localises to the cytoplasm. The protein operates within amino-acid biosynthesis; L-arginine biosynthesis [regulation]. In terms of biological role, regulates arginine biosynthesis genes. This is Arginine repressor from Photorhabdus laumondii subsp. laumondii (strain DSM 15139 / CIP 105565 / TT01) (Photorhabdus luminescens subsp. laumondii).